The chain runs to 368 residues: POU domain, class 3, transcription factor 1 (368 aa).

The span at 1 to 16 shows a compositional bias: polar residues; sequence MATTAQYIPRNNSLPS. Disordered stretches follow at residues 1 to 28, 69 to 88, 100 to 134, and 147 to 193; these read MATT…DRMH, TDWT…ASVQ, SHLV…NGHQ, and SPQP…PSSD. Residues 79 to 88 show a composition bias toward basic and acidic residues; that stretch reads QAEHNKASVQ. Polar residues predominate over residues 105–134; it reads QPTQNSHHGSWAPTTTHHLSPLSPASNGHQ. A compositionally biased stretch (basic and acidic residues) spans 155-170; it reads GLRDPLHDDAGSHDNQ. Residues 187 to 261 enclose the POU-specific domain; it reads EDAPSSDDLE…LLNKWLEETD (75 aa). Positions 279 to 338 form a DNA-binding region, homeobox; that stretch reads KRKKRTSIEVGVKGALENHFLKCPKPSAHEITTLAGTLQLEKEVVRVWFCNRRQKEKRMT.

It belongs to the POU transcription factor family. Class-3 subfamily. Predominantly expressed in the embryonic and adult central nervous system.

The protein localises to the nucleus. In terms of biological role, transcription factor that may play important roles in patterning the embryonic brain. Could directly respond to the reception of the sonic hedgehog (shh) signal. This chain is POU domain, class 3, transcription factor 1 (pou3f1), found in Danio rerio (Zebrafish).